Reading from the N-terminus, the 548-residue chain is MDSQRNLLVIALLFVSFMIWQAWEQDKNPQPQTQQTTQTTTTAAGSAADQGVPASGQGKMITVKTDVLDLTINTRGGDVEQALLPAYPKELGSNEPFQLLETTPQFIYQAQSGLTGRDGPDNPANGPRPLYNVEKDAFVLADGQNELQVPMTYTDAAGNTFTKTFVFKRGDYAVNVNYSVQNTGEKPLEVSTFGQLKQSVNLPPHRDTGSSNFALHTFRGAAYSTPDEKYEKYKFDTIADNENLNVSSKGGWVAMLQQYFATAWIPRNDGTNNFYTANLGNGIVAIGYKAQPVLVQPGQTSAMTSTLWVGPEIQDKMAAVAPHLDLTVDYGWLWFISQPLFKLLKWIHSFVGNWGFSIIIITFIVRGIMYPLTKAQYTSMAKMRMLQPKIQAMRERLGDDKQRQSQEMMALYKAEKVNPLGGCFPLIIQMPIFLALYYMLMGSIELRHAPFALWIHDLSAQDPYYILPILMGVTMFFIQKMSPTTVTDPMQQKIMTFMPVIFTVFFLWFPSGLVLYYIVSNLVTIIQQQLIYRGLEKRGLHSREKKKS.

Residues 6–26 (NLLVIALLFVSFMIWQAWEQD) form a helical membrane-spanning segment. The segment at 28–56 (NPQPQTQQTTQTTTTAAGSAADQGVPASG) is disordered. Low complexity predominate over residues 29 to 42 (PQPQTQQTTQTTTT). Helical transmembrane passes span 350–370 (FVGN…GIMY), 424–444 (FPLI…MGSI), 458–478 (LSAQ…MFFI), and 499–519 (PVIF…YYIV).

The protein belongs to the OXA1/ALB3/YidC family. Type 1 subfamily. Interacts with the Sec translocase complex via SecD. Specifically interacts with transmembrane segments of nascent integral membrane proteins during membrane integration.

Its subcellular location is the cell inner membrane. In terms of biological role, required for the insertion and/or proper folding and/or complex formation of integral membrane proteins into the membrane. Involved in integration of membrane proteins that insert both dependently and independently of the Sec translocase complex, as well as at least some lipoproteins. Aids folding of multispanning membrane proteins. The polypeptide is Membrane protein insertase YidC (Salmonella paratyphi C (strain RKS4594)).